Here is a 303-residue protein sequence, read N- to C-terminus: ATP synthase gamma chain (303 aa).

The protein belongs to the ATPase gamma chain family. As to quaternary structure, F-type ATPases have 2 components, CF(1) - the catalytic core - and CF(0) - the membrane proton channel. CF(1) has five subunits: alpha(3), beta(3), gamma(1), delta(1), epsilon(1). CF(0) has three main subunits: a, b and c.

It localises to the cell inner membrane. Produces ATP from ADP in the presence of a proton gradient across the membrane. The gamma chain is believed to be important in regulating ATPase activity and the flow of protons through the CF(0) complex. The chain is ATP synthase gamma chain from Elusimicrobium minutum (strain Pei191).